A 200-amino-acid chain; its full sequence is Phosphoheptose isomerase (200 aa).

The SIS domain occupies V37–L199. Substrate is bound at residue N52–G54. Zn(2+)-binding residues include H61 and E65. Substrate contacts are provided by residues E65, N94–D95, T120–S122, S125, and Q175. The Zn(2+) site is built by Q175 and H183.

This sequence belongs to the SIS family. GmhA subfamily. In terms of assembly, homotetramer. Requires Zn(2+) as cofactor.

It localises to the cytoplasm. The catalysed reaction is 2 D-sedoheptulose 7-phosphate = D-glycero-alpha-D-manno-heptose 7-phosphate + D-glycero-beta-D-manno-heptose 7-phosphate. It functions in the pathway carbohydrate biosynthesis; D-glycero-D-manno-heptose 7-phosphate biosynthesis; D-glycero-alpha-D-manno-heptose 7-phosphate and D-glycero-beta-D-manno-heptose 7-phosphate from sedoheptulose 7-phosphate: step 1/1. In terms of biological role, catalyzes the isomerization of sedoheptulose 7-phosphate in D-glycero-D-manno-heptose 7-phosphate. The polypeptide is Phosphoheptose isomerase (Methylibium petroleiphilum (strain ATCC BAA-1232 / LMG 22953 / PM1)).